The chain runs to 536 residues: Plasmepsin V (536 aa).

Residues 1–34 (MVGASLGPPGRGSLSRLIRLVICVLTLCALSVQG) form the signal peptide. The Lumenal portion of the chain corresponds to 35 to 492 (RSESTEGHSK…RKDNIFLKIP (458 aa)). The Peptidase A1 domain occupies 62–462 (YFLDIDIGTP…DIQKNRIGFV (401 aa)). Asp-80 is a catalytic residue. 7 disulfide bridges follow: Cys-90/Cys-172, Cys-93/Cys-96, Cys-117/Cys-128, Cys-122/Cys-133, Cys-220/Cys-466, Cys-337/Cys-382, and Cys-391/Cys-427. Low complexity predominate over residues 244–258 (SKSVSGQGSGPVSES). The tract at residues 244 to 264 (SKSVSGQGSGPVSESLSESGE) is disordered. Residue Asp-313 is part of the active site. A helical transmembrane segment spans residues 493–513 (FFYLYSLFVVFALSVLLSLVF). Residues 514-536 (YVRRLYHMEYSPLPSEGKAPADA) lie on the Cytoplasmic side of the membrane.

This sequence belongs to the peptidase A1 family. Component of a complex composed of SPC25 and PMV; the interaction is mediated via the transmembrane domains. The complex interacts with the SEC61 channel-forming translocon complex and is involved in the recognition and import of PEXEL motif-containing proteins into the ER for subsequent export. It is not clear if the zymogen has a cleavable propeptide. Cleavage of the putative propeptide is dispensable for catalytic activity.

It is found in the endoplasmic reticulum membrane. Its activity is regulated as follows. Inhibited by peptidomimetic inhibitors such as WEHI-842. Functionally, during the asexual blood stage, plays an essential role in the export of several proteins into the host erythrocytes by cleaving the pentameric localization motif RxLxE/Q/D (termed Plasmodium export element (PEXEL)) located downstream of the N-terminal secretory signal sequence. Specifically, cleaves after the leucine residue in the RxLxE/Q/D (or RxLxxE) motif of exported proteins including EMP1. Also, by regulating protein export, plays an essential role in gametocyte development and thus parasite transmission to the mosquito vector. The protein is Plasmepsin V of Plasmodium vivax (strain Salvador I).